The following is a 336-amino-acid chain: Oxaloacetate decarboxylase (336 aa).

One can recognise a Pyruvate carboxyltransferase domain in the interval 10-258; it reads PIVLDTTVRD…LAAVDLDRIF (249 aa). Mn(2+)-binding residues include Asp-19, His-197, and His-199.

Belongs to the 4-hydroxy-2-oxovalerate aldolase family. As to quaternary structure, homodimer. It depends on a divalent metal cation as a cofactor.

The catalysed reaction is oxaloacetate + H(+) = pyruvate + CO2. Activity is abolished upon incubation with Chelex and EDTA. Functionally, exhibits oxaloacetate decarboxylase activity. Lacks any detectable aldolase activity with 4-hydroxy-2-oxopentanoate (HOPA), 4-hydroxy-2-oxohexanoate (HOHA) or other 4-hydroxy-2-oxoacids. The polypeptide is Oxaloacetate decarboxylase (Mycobacterium tuberculosis (strain ATCC 25618 / H37Rv)).